Reading from the N-terminus, the 246-residue chain is Adenosine 5'-phosphosulfate reductase (246 aa).

[4Fe-4S] cluster-binding residues include Cys131, Cys132, Cys214, and Cys217. The active-site Nucleophile; cysteine thiosulfonate intermediate is Cys242.

This sequence belongs to the PAPS reductase family. CysH subfamily. [4Fe-4S] cluster serves as cofactor.

Its subcellular location is the cytoplasm. It carries out the reaction [thioredoxin]-disulfide + sulfite + AMP + 2 H(+) = adenosine 5'-phosphosulfate + [thioredoxin]-dithiol. It functions in the pathway sulfur metabolism; hydrogen sulfide biosynthesis; sulfite from sulfate. Functionally, catalyzes the formation of sulfite from adenosine 5'-phosphosulfate (APS) using thioredoxin as an electron donor. The polypeptide is Adenosine 5'-phosphosulfate reductase (Neisseria meningitidis serogroup B (strain ATCC BAA-335 / MC58)).